A 183-amino-acid polypeptide reads, in one-letter code: Der GTPase-activating protein YihI (183 aa).

The segment covering 1–18 (MNQPSKAPRAPRSSAATP) has biased composition (low complexity). Positions 1–114 (MNQPSKAPRA…EEELAKLEND (114 aa)) are disordered. Positions 25 to 34 (RAELDQEARE) are enriched in basic and acidic residues. A compositionally biased stretch (low complexity) spans 56 to 65 (NQKNKAAAQA). Basic and acidic residues predominate over residues 92-114 (PKAEAKPKPRLTPEEELAKLEND).

The protein belongs to the YihI family. Interacts with Der.

Functionally, a GTPase-activating protein (GAP) that modifies Der/EngA GTPase function. May play a role in ribosome biogenesis. The sequence is that of Der GTPase-activating protein YihI from Serratia proteamaculans (strain 568).